The primary structure comprises 234 residues: Ubiquinone biosynthesis O-methyltransferase (234 aa).

Positions 39, 59, 80, and 124 each coordinate S-adenosyl-L-methionine.

This sequence belongs to the methyltransferase superfamily. UbiG/COQ3 family.

It catalyses the reaction a 3-demethylubiquinol + S-adenosyl-L-methionine = a ubiquinol + S-adenosyl-L-homocysteine + H(+). The enzyme catalyses a 3-(all-trans-polyprenyl)benzene-1,2-diol + S-adenosyl-L-methionine = a 2-methoxy-6-(all-trans-polyprenyl)phenol + S-adenosyl-L-homocysteine + H(+). It participates in cofactor biosynthesis; ubiquinone biosynthesis. In terms of biological role, O-methyltransferase that catalyzes the 2 O-methylation steps in the ubiquinone biosynthetic pathway. This is Ubiquinone biosynthesis O-methyltransferase from Aliivibrio fischeri (strain MJ11) (Vibrio fischeri).